The following is a 472-amino-acid chain: Exodeoxyribonuclease 7 large subunit (472 aa).

The protein belongs to the XseA family. In terms of assembly, heterooligomer composed of large and small subunits.

It localises to the cytoplasm. The enzyme catalyses Exonucleolytic cleavage in either 5'- to 3'- or 3'- to 5'-direction to yield nucleoside 5'-phosphates.. In terms of biological role, bidirectionally degrades single-stranded DNA into large acid-insoluble oligonucleotides, which are then degraded further into small acid-soluble oligonucleotides. The sequence is that of Exodeoxyribonuclease 7 large subunit from Carboxydothermus hydrogenoformans (strain ATCC BAA-161 / DSM 6008 / Z-2901).